A 272-amino-acid polypeptide reads, in one-letter code: Indole-3-glycerol phosphate synthase (272 aa).

This sequence belongs to the TrpC family.

It carries out the reaction 1-(2-carboxyphenylamino)-1-deoxy-D-ribulose 5-phosphate + H(+) = (1S,2R)-1-C-(indol-3-yl)glycerol 3-phosphate + CO2 + H2O. It participates in amino-acid biosynthesis; L-tryptophan biosynthesis; L-tryptophan from chorismate: step 4/5. This is Indole-3-glycerol phosphate synthase from Mycobacterium ulcerans (strain Agy99).